The sequence spans 988 residues: Bifunctional glutamine synthetase adenylyltransferase/adenylyl-removing enzyme (988 aa).

Residues 1–472 (MTKRETVERR…RYSALFEQET (472 aa)) are adenylyl removase. Residues 476–988 (GEAGNLVFTG…AFVAVVKNGG (513 aa)) form an adenylyl transferase region.

The protein belongs to the GlnE family. Mg(2+) is required as a cofactor.

It carries out the reaction [glutamine synthetase]-O(4)-(5'-adenylyl)-L-tyrosine + phosphate = [glutamine synthetase]-L-tyrosine + ADP. The enzyme catalyses [glutamine synthetase]-L-tyrosine + ATP = [glutamine synthetase]-O(4)-(5'-adenylyl)-L-tyrosine + diphosphate. In terms of biological role, involved in the regulation of glutamine synthetase GlnA, a key enzyme in the process to assimilate ammonia. When cellular nitrogen levels are high, the C-terminal adenylyl transferase (AT) inactivates GlnA by covalent transfer of an adenylyl group from ATP to specific tyrosine residue of GlnA, thus reducing its activity. Conversely, when nitrogen levels are low, the N-terminal adenylyl removase (AR) activates GlnA by removing the adenylyl group by phosphorolysis, increasing its activity. The regulatory region of GlnE binds the signal transduction protein PII (GlnB) which indicates the nitrogen status of the cell. This chain is Bifunctional glutamine synthetase adenylyltransferase/adenylyl-removing enzyme, found in Agrobacterium fabrum (strain C58 / ATCC 33970) (Agrobacterium tumefaciens (strain C58)).